The primary structure comprises 301 residues: Probable aspartoacylase (301 aa).

The Zn(2+) site is built by H13 and E16. Substrate contacts are provided by residues R54 and 61–62; that span reads NR. H105 lines the Zn(2+) pocket. Residues E163 and Y273 each coordinate substrate.

It belongs to the AspA/AstE family. Aspartoacylase subfamily. Zn(2+) is required as a cofactor.

The enzyme catalyses an N-acyl-L-aspartate + H2O = a carboxylate + L-aspartate. The polypeptide is Probable aspartoacylase (Prochlorococcus marinus (strain AS9601)).